The sequence spans 469 residues: Threonine synthase (469 aa).

K112 bears the N6-(pyridoxal phosphate)lysine mark.

This sequence belongs to the threonine synthase family. Pyridoxal 5'-phosphate serves as cofactor.

It catalyses the reaction O-phospho-L-homoserine + H2O = L-threonine + phosphate. The protein operates within amino-acid biosynthesis; L-threonine biosynthesis; L-threonine from L-aspartate: step 5/5. Functionally, catalyzes the gamma-elimination of phosphate from L-phosphohomoserine and the beta-addition of water to produce L-threonine. This Pseudomonas aeruginosa (strain ATCC 15692 / DSM 22644 / CIP 104116 / JCM 14847 / LMG 12228 / 1C / PRS 101 / PAO1) protein is Threonine synthase (thrC).